A 287-amino-acid polypeptide reads, in one-letter code: 4,4'-diapophytoene synthase (287 aa).

(2E,6E)-farnesyl diphosphate contacts are provided by residues 18 to 21, Y41, and R45; that span reads HSKS. Mg(2+) is bound by residues D48 and D52. Q165 serves as a coordination point for (2E,6E)-farnesyl diphosphate. N168 lines the Mg(2+) pocket. Residue R171 coordinates (2E,6E)-farnesyl diphosphate. Mg(2+) is bound at residue D172. Position 248 (Y248) interacts with (2E,6E)-farnesyl diphosphate.

The protein belongs to the phytoene/squalene synthase family. CrtM subfamily. The cofactor is Mg(2+).

The catalysed reaction is 2 (2E,6E)-farnesyl diphosphate = 15-cis-4,4'-diapophytoene + 2 diphosphate. It functions in the pathway carotenoid biosynthesis; staphyloxanthin biosynthesis; staphyloxanthin from farnesyl diphosphate: step 1/5. Functionally, involved in the biosynthesis of the yellow-orange carotenoid staphyloxanthin, which plays a role in the virulence via its protective function against oxidative stress. Catalyzes the head-to-head condensation of two molecules of farnesyl diphosphate (FPP) into the colorless C(30) carotenoid 4,4'-diapophytoene (dehydrosqualene). This chain is 4,4'-diapophytoene synthase (crtM), found in Staphylococcus aureus (strain Mu50 / ATCC 700699).